The chain runs to 183 residues: tRNA-splicing endonuclease (183 aa).

Catalysis depends on residues Tyr120, His128, and Lys159.

Belongs to the tRNA-intron endonuclease family. Archaeal short subfamily. In terms of assembly, homotetramer; although the tetramer contains four active sites, only two participate in the cleavage. Therefore, it should be considered as a dimer of dimers.

It carries out the reaction pretRNA = a 3'-half-tRNA molecule with a 5'-OH end + a 5'-half-tRNA molecule with a 2',3'-cyclic phosphate end + an intron with a 2',3'-cyclic phosphate and a 5'-hydroxyl terminus.. Its function is as follows. Endonuclease that removes tRNA introns. Cleaves pre-tRNA at the 5'- and 3'-splice sites to release the intron. The products are an intron and two tRNA half-molecules bearing 2',3' cyclic phosphate and 5'-OH termini. Recognizes a pseudosymmetric substrate in which 2 bulged loops of 3 bases are separated by a stem of 4 bp. The sequence is that of tRNA-splicing endonuclease from Pyrobaculum arsenaticum (strain DSM 13514 / JCM 11321 / PZ6).